The primary structure comprises 253 residues: uncharacterized protein (253 aa).

The span at 1-14 (MKVPILSRLRSLSS) shows a compositional bias: low complexity. 2 disordered regions span residues 1–192 (MKVP…PKSS) and 212–253 (PETV…AIQL). 2 stretches are compositionally biased toward basic and acidic residues: residues 17–30 (RNNE…EHQV) and 45–60 (KSDK…KSGE). Low complexity-rich tracts occupy residues 63-104 (PSTP…GSDS) and 111-154 (KTLS…QTPR). Polar residues predominate over residues 215 to 235 (VVTSTPRQQSRPPSAQNTPNF). Positions 236–253 (TSQGGSRSTSRRQSAIQL) are enriched in low complexity.

This is an uncharacterized protein from Dictyostelium discoideum (Social amoeba).